A 388-amino-acid chain; its full sequence is Lamin tail domain-containing protein 1 (388 aa).

The 119-residue stretch at 136–254 folds into the LTD domain; that stretch reads EVGQFTSSSL…QAIAWYTPIH (119 aa). The tract at residues 349 to 388 is disordered; it reads EPHNTSTAGGRLDRQPRTRSTRPNRASGSKKKKTSESQKQ. Over residues 365–381 the composition is skewed to basic residues; the sequence is RTRSTRPNRASGSKKKK.

This sequence belongs to the intermediate filament family.

The polypeptide is Lamin tail domain-containing protein 1 (LMNTD1) (Homo sapiens (Human)).